Reading from the N-terminus, the 646-residue chain is Anoctamin-10 (646 aa).

The next 8 membrane-spanning stretches (helical) occupy residues 210 to 230, 241 to 261, 314 to 334, 357 to 377, 404 to 424, 502 to 522, 557 to 577, and 592 to 612; these read LYFG…LIGI, DKYV…LEVW, IYLV…YVMM, VLLF…NLLY, VLVF…FVMQ, FLLF…AVLV, LAFE…IALS, and ILTV…LAFV.

Belongs to the anoctamin family.

It localises to the membrane. Functionally, does not exhibit calcium-activated chloride channel (CaCC) activity. Can inhibit the activity of ANO1. This chain is Anoctamin-10 (ano10), found in Danio rerio (Zebrafish).